A 943-amino-acid chain; its full sequence is Protein translocase subunit SecA (943 aa).

ATP contacts are provided by residues Q90, 108 to 112 (GEGKT), and D509. Residues 534–576 (KPDNEHKPPIPQQRSSKAGGGFASKSESISNKNSKSSGASLFP) are disordered. Low complexity predominate over residues 556–570 (ASKSESISNKNSKSS).

Belongs to the SecA family. As to quaternary structure, monomer and homodimer. Part of the essential Sec protein translocation apparatus which comprises SecA, SecYEG and auxiliary proteins SecDF. Other proteins may also be involved.

The protein resides in the cell inner membrane. It is found in the cellular thylakoid membrane. It localises to the cytoplasm. The enzyme catalyses ATP + H2O + cellular proteinSide 1 = ADP + phosphate + cellular proteinSide 2.. Part of the Sec protein translocase complex. Interacts with the SecYEG preprotein conducting channel. Has a central role in coupling the hydrolysis of ATP to the transfer of proteins into and across the cell membrane, serving as an ATP-driven molecular motor driving the stepwise translocation of polypeptide chains across the membrane. Its function is as follows. Probably participates in protein translocation into and across both the cytoplasmic and thylakoid membranes in cyanobacterial cells. This is Protein translocase subunit SecA from Prochlorococcus marinus (strain MIT 9515).